The following is a 305-amino-acid chain: Protein ORANGE, chloroplastic (305 aa).

Residues 1-54 (MSCLGRILSVSYPPDPYGSRLSVSKLSSPGRNRRLRWRFTALDSDSSSLDSDSS) constitute a chloroplast transit peptide. Helical transmembrane passes span 144 to 164 (VYYA…GLLA) and 197 to 217 (IVAS…VVEV). Residues 206 to 297 (VGVISALMVV…CTGMAMASEH (92 aa)) form a CR-type-like region. The CXXCXGXG motif repeat unit spans residues 228-235 (CKYCLGTG). Residues 239–246 (CARCSSTG) form a CXXCXXXG motif repeat. The CXXCXGXG motif repeat unit spans residues 272 to 279 (CSNCSGAG). Residues 283 to 290 (CPTCLCTG) form a CXXCXXXG motif repeat.

It belongs to the orange-like family. In terms of assembly, interacts with ERF1-2. Expressed in young leaves, curds and flower buds.

The protein resides in the plastid. The protein localises to the chloroplast membrane. It is found in the nucleus. In terms of biological role, involved in chromoplast differentiation. Is associated with a cellular process that triggers the differentiation of pro-plastids or other non-colored plastids into chromoplasts for carotenoid accumulation. Associated with carotenoid accumulation in de-etiolated cotyledons. Controls leaf petiole elongation by suppressing the expression of ERF1 genes. The protein is Protein ORANGE, chloroplastic of Brassica oleracea var. botrytis (Cauliflower).